The chain runs to 201 residues: Ribosomal RNA large subunit methyltransferase E (201 aa).

S-adenosyl-L-methionine-binding residues include G40, W42, D62, D78, and D101. The Proton acceptor role is filled by K141.

This sequence belongs to the class I-like SAM-binding methyltransferase superfamily. RNA methyltransferase RlmE family.

It is found in the cytoplasm. It catalyses the reaction uridine(2552) in 23S rRNA + S-adenosyl-L-methionine = 2'-O-methyluridine(2552) in 23S rRNA + S-adenosyl-L-homocysteine + H(+). Its function is as follows. Specifically methylates the uridine in position 2552 of 23S rRNA at the 2'-O position of the ribose in the fully assembled 50S ribosomal subunit. The sequence is that of Ribosomal RNA large subunit methyltransferase E from Anaplasma marginale (strain Florida).